Here is a 425-residue protein sequence, read N- to C-terminus: MNAMMETSELPAVFDGVKLAAVAAVLYVIVRCLNLKSPTAPPDLYFQDSGLSRFLLKSCPLLTKEYIPPLIWGKSGHIQTALYGKMGRVRSPHPYGHRKFITMSDGATSTFDLFEPLAEHCVGDDITMVICPGIANHSEKQYIRTFVDYAQKNGYRCAVLNHLGALPNIELTSPRMFTYGCTWEFGAMVNYIKKTYPLTQLVVVGFSLGGNIVCKYLGETQANQEKVLCCVSVCQGYSALRAQETFMQWDQCRRFYNFLMADNMKKIILSHRQALFGDHVKKPQSLEDTDLSRLYTATSLMQIDDNVMRKFHGYNSLKEYYEEESCMRYLHRIYVPLMLVNAADDPLVHESLLAIPKSLSEKRENVMFVLPLHGGHLGFFEGSVLFPEPLTWMDKLVVEYANAICQWERNKSQCSDTELVEADLE.

At 1-9 (MNAMMETSE) the chain is on the cytoplasmic side. The chain crosses the membrane as a helical; Signal-anchor for type II membrane protein span at residues 10 to 30 (LPAVFDGVKLAAVAAVLYVIV). Topologically, residues 31 to 425 (RCLNLKSPTA…DTELVEADLE (395 aa)) are extracellular. One can recognise an AB hydrolase-1 domain in the interval 128-382 (MVICPGIANH…HGGHLGFFEG (255 aa)). A glycan (N-linked (GlcNAc...) asparagine) is linked at asparagine 136. Residue serine 207 is the Nucleophile of the active site. Active-site charge relay system residues include aspartate 345 and histidine 376. Asparagine 410 carries N-linked (GlcNAc...) asparagine glycosylation.

The protein belongs to the AB hydrolase superfamily. AB hydrolase 4 family.

Its subcellular location is the cell membrane. The catalysed reaction is Hydrolyzes glycerol monoesters of long-chain fatty acids.. It carries out the reaction an acetyl ester + H2O = an aliphatic alcohol + acetate + H(+). The enzyme catalyses a triacylglycerol + H2O = a diacylglycerol + a fatty acid + H(+). It catalyses the reaction 2-(5Z,8Z,11Z,14Z-eicosatetraenoyl)-glycerol + H2O = glycerol + (5Z,8Z,11Z,14Z)-eicosatetraenoate + H(+). The catalysed reaction is a butanoate ester + H2O = an aliphatic alcohol + butanoate + H(+). It carries out the reaction hexadecanoate ester + H2O = an aliphatic alcohol + hexadecanoate + H(+). With respect to regulation, acylglycerol lipase activity is activated upon binding to progesterone. Progesterone-dependent acylglycerol lipase that catalyzes hydrolysis of endocannabinoid arachidonoylglycerol (AG) from cell membrane. Acts as a progesterone receptor: progesterone-binding activates the acylglycerol lipase activity, mediating degradation of 1-arachidonoylglycerol (1AG) and 2-arachidonoylglycerol (2AG) to glycerol and arachidonic acid (AA). Also displays an ester hydrolase activity against acetyl ester, butanoate ester and hexadecanoate ester. Plays a key role in sperm capacitation in response to progesterone by mediating degradation of 2AG, an inhibitor of the sperm calcium channel CatSper, leading to calcium influx via CatSper and sperm activation. May also play a role in smooth muscle cells migration. This Bos taurus (Bovine) protein is Monoacylglycerol lipase ABHD2 (ABHD2).